A 392-amino-acid chain; its full sequence is Formate-dependent phosphoribosylglycinamide formyltransferase (392 aa).

N(1)-(5-phospho-beta-D-ribosyl)glycinamide-binding positions include 15–16 (EL) and glutamate 75. Residues arginine 107, lysine 148, 153–158 (SSGKGQ), 188–191 (EEFL), and glutamate 196 each bind ATP. One can recognise an ATP-grasp domain in the interval 112–302 (DLASGELGLH…EFELHLRAVL (191 aa)). The Mg(2+) site is built by glutamate 261 and glutamate 273. N(1)-(5-phospho-beta-D-ribosyl)glycinamide is bound by residues aspartate 280, lysine 350, and 357–358 (RR).

This sequence belongs to the PurK/PurT family. In terms of assembly, homodimer.

The enzyme catalyses N(1)-(5-phospho-beta-D-ribosyl)glycinamide + formate + ATP = N(2)-formyl-N(1)-(5-phospho-beta-D-ribosyl)glycinamide + ADP + phosphate + H(+). Its pathway is purine metabolism; IMP biosynthesis via de novo pathway; N(2)-formyl-N(1)-(5-phospho-D-ribosyl)glycinamide from N(1)-(5-phospho-D-ribosyl)glycinamide (formate route): step 1/1. Its function is as follows. Involved in the de novo purine biosynthesis. Catalyzes the transfer of formate to 5-phospho-ribosyl-glycinamide (GAR), producing 5-phospho-ribosyl-N-formylglycinamide (FGAR). Formate is provided by PurU via hydrolysis of 10-formyl-tetrahydrofolate. In Synechococcus sp. (strain CC9902), this protein is Formate-dependent phosphoribosylglycinamide formyltransferase.